Here is a 252-residue protein sequence, read N- to C-terminus: RNA-binding protein 7 (252 aa).

Residues 9 to 86 (RTLFVGNLDP…RQLNIKFKTG (78 aa)) form the RRM domain. 2 stretches are compositionally biased toward polar residues: residues 88 to 107 (SHINQEGKSPANSQNPSPAN) and 119 to 137 (QMGSPSYSPPQHMQRPFSS). 2 disordered regions span residues 88–137 (SHIN…PFSS) and 171–252 (QLRG…WKHF). Composition is skewed to basic and acidic residues over residues 211–230 (ERNRRDGQRGDFYHHDDRSG) and 237–252 (PPDRRRDSREGRWKHF).

Component of the nuclear exosome targeting (NEXT) complex composed of MTREX, ZCCHC8, and RBM7 that directs a subset of non-coding short-lived RNAs for exosomal degradation.

The protein resides in the nucleus. It is found in the nucleoplasm. RNA-binding subunit of the trimeric nuclear exosome targeting (NEXT) complex, a complex that functions as an RNA exosome cofactor that directs a subset of non-coding short-lived RNAs for exosomal degradation. NEXT is involved in surveillance and turnover of aberrant transcripts and non-coding RNAs. Binds preferentially polyuridine sequences and associates with newly synthesized RNAs, including pre-mRNAs and short-lived exosome substrates such as promoter upstream transcripts (PROMPTs), enhancer RNAs (eRNAs), and 3'-extended products from small nuclear RNAs (snRNAs). This is RNA-binding protein 7 from Danio rerio (Zebrafish).